The chain runs to 130 residues: Large ribosomal subunit protein bL12 (130 aa).

The protein belongs to the bacterial ribosomal protein bL12 family. As to quaternary structure, homodimer. Part of the ribosomal stalk of the 50S ribosomal subunit. Forms a multimeric L10(L12)X complex, where L10 forms an elongated spine to which 2 to 4 L12 dimers bind in a sequential fashion. Binds GTP-bound translation factors.

Its function is as follows. Forms part of the ribosomal stalk which helps the ribosome interact with GTP-bound translation factors. Is thus essential for accurate translation. The sequence is that of Large ribosomal subunit protein bL12 from Mycolicibacterium paratuberculosis (strain ATCC BAA-968 / K-10) (Mycobacterium paratuberculosis).